Consider the following 98-residue polypeptide: NADH-ubiquinone oxidoreductase chain 4L (98 aa).

3 consecutive transmembrane segments (helical) span residues 1–21 (MPFIYINILLAFFISFIGLLM), 29–49 (SLLCLEGMMLSLYILGTLLCL), and 61–81 (MILLVFAACEAAVGLALLVMV).

Belongs to the complex I subunit 4L family. Core subunit of respiratory chain NADH dehydrogenase (Complex I) which is composed of 45 different subunits.

It localises to the mitochondrion inner membrane. It carries out the reaction a ubiquinone + NADH + 5 H(+)(in) = a ubiquinol + NAD(+) + 4 H(+)(out). Functionally, core subunit of the mitochondrial membrane respiratory chain NADH dehydrogenase (Complex I) which catalyzes electron transfer from NADH through the respiratory chain, using ubiquinone as an electron acceptor. Part of the enzyme membrane arm which is embedded in the lipid bilayer and involved in proton translocation. This Dugong dugon (Dugong) protein is NADH-ubiquinone oxidoreductase chain 4L (MT-ND4L).